A 105-amino-acid chain; its full sequence is Defensin-like protein (105 aa).

Positions 1 to 25 (MARSLCFMAFAILAMMLFVAYEVQA) are cleaved as a signal peptide. 4 cysteine pairs are disulfide-bonded: Cys28–Cys72, Cys39–Cys59, Cys45–Cys66, and Cys49–Cys68.

The protein belongs to the DEFL family. As to expression, flower. Found in petals, stamen and pistils, but not in sepals. In particular, accumulation in a configuration surrounding the inner reproductive whorls.

The protein localises to the secreted. It localises to the cell wall. Its subcellular location is the vacuole. Involved in floral organogenesis. May play a protective role in flowers by protecting the reproductive organs from potential pathogen attack. This is Defensin-like protein (FST) from Nicotiana tabacum (Common tobacco).